We begin with the raw amino-acid sequence, 628 residues long: Crossover junction endonuclease MUS81 (628 aa).

The span at 298-310 (SHTFGNGDSNNSI) shows a compositional bias: polar residues. Residues 298–318 (SHTFGNGDSNNSIEPLPRDTS) form a disordered region. Positions 348–445 (YPVIDHREVR…HKYYLIEETI (98 aa)) constitute an ERCC4 domain.

It belongs to the XPF family. As to quaternary structure, interacts with EME1. Requires Mg(2+) as cofactor.

It localises to the nucleus. Functionally, interacts with EME1 to form a DNA structure-specific endonuclease with substrate preference for branched DNA structures with a 5'-end at the branch nick. Typical substrates include 3'-flap structures, D-loops, replication forks and nicked Holliday junctions. May be required in mitosis for the processing of stalled or collapsed replication fork intermediates. May be required in meiosis for the repair of meiosis-specific double strand breaks subsequent to single-end invasion (SEI). The sequence is that of Crossover junction endonuclease MUS81 (MUS81) from Candida glabrata (strain ATCC 2001 / BCRC 20586 / JCM 3761 / NBRC 0622 / NRRL Y-65 / CBS 138) (Yeast).